Here is a 368-residue protein sequence, read N- to C-terminus: DNA replication and repair protein RecF (368 aa).

30–37 contacts ATP; that stretch reads GNNAQGKT.

The protein belongs to the RecF family.

The protein localises to the cytoplasm. Functionally, the RecF protein is involved in DNA metabolism; it is required for DNA replication and normal SOS inducibility. RecF binds preferentially to single-stranded, linear DNA. It also seems to bind ATP. This Streptococcus pyogenes serotype M4 (strain MGAS10750) protein is DNA replication and repair protein RecF.